Here is a 750-residue protein sequence, read N- to C-terminus: Photosystem I P700 chlorophyll a apoprotein A1 (750 aa).

The next 8 helical transmembrane spans lie at 70–93, 156–179, 195–219, 291–309, 346–369, 385–411, 433–455, and 531–549; these read VFSA…FHGA, LYCT…FHYH, LNHH…HVSL, IAHH…GHMY, WHAQ…HHMY, LSLF…IFMV, AIIS…LYIH, and FLVH…LILL. The [4Fe-4S] cluster site is built by C573 and C582. 2 consecutive transmembrane segments (helical) span residues 589 to 610 and 664 to 686; these read HVFL…HFSW and LSAY…MFLF. Position 675 (H675) interacts with chlorophyll a'. Chlorophyll a-binding residues include M683 and Y691. A phylloquinone-binding site is contributed by W692. A helical membrane pass occupies residues 724–744; that stretch reads AVGVTHYLLGGIATTWAFFLA.

Belongs to the PsaA/PsaB family. The PsaA/B heterodimer binds the P700 chlorophyll special pair and subsequent electron acceptors. PSI consists of a core antenna complex that captures photons, and an electron transfer chain that converts photonic excitation into a charge separation. The eukaryotic PSI reaction center is composed of at least 11 subunits. Requires P700 is a chlorophyll a/chlorophyll a' dimer, A0 is one or more chlorophyll a, A1 is one or both phylloquinones and FX is a shared 4Fe-4S iron-sulfur center. as cofactor.

The protein resides in the plastid. Its subcellular location is the chloroplast thylakoid membrane. The catalysed reaction is reduced [plastocyanin] + hnu + oxidized [2Fe-2S]-[ferredoxin] = oxidized [plastocyanin] + reduced [2Fe-2S]-[ferredoxin]. Its function is as follows. PsaA and PsaB bind P700, the primary electron donor of photosystem I (PSI), as well as the electron acceptors A0, A1 and FX. PSI is a plastocyanin-ferredoxin oxidoreductase, converting photonic excitation into a charge separation, which transfers an electron from the donor P700 chlorophyll pair to the spectroscopically characterized acceptors A0, A1, FX, FA and FB in turn. Oxidized P700 is reduced on the lumenal side of the thylakoid membrane by plastocyanin. This Olimarabidopsis pumila (Dwarf rocket) protein is Photosystem I P700 chlorophyll a apoprotein A1.